A 555-amino-acid chain; its full sequence is Glutamine--tRNA ligase (555 aa).

Positions 34–44 (PEPNGYLHIGH) match the 'HIGH' region motif. Residues 35 to 37 (EPN) and 41 to 47 (HIGHAKS) contribute to the ATP site. Positions 67 and 212 each coordinate L-glutamine. Residues Thr231, 261–262 (RL), and 269–271 (MSK) contribute to the ATP site. The 'KMSKS' region motif lies at 268–272 (VMSKR). The segment at 317-324 (TKQDNTIE) is interaction with tRNA.

Belongs to the class-I aminoacyl-tRNA synthetase family. As to quaternary structure, monomer.

The protein localises to the cytoplasm. It catalyses the reaction tRNA(Gln) + L-glutamine + ATP = L-glutaminyl-tRNA(Gln) + AMP + diphosphate. This Salmonella paratyphi B (strain ATCC BAA-1250 / SPB7) protein is Glutamine--tRNA ligase.